The chain runs to 189 residues: Potassium-transporting ATPase KdpC subunit (189 aa).

The chain crosses the membrane as a helical span at residues 6-26; sequence PAILFFIVFTILCGGVYPAVV.

The protein belongs to the KdpC family. As to quaternary structure, the system is composed of three essential subunits: KdpA, KdpB and KdpC.

The protein localises to the cell inner membrane. Functionally, part of the high-affinity ATP-driven potassium transport (or Kdp) system, which catalyzes the hydrolysis of ATP coupled with the electrogenic transport of potassium into the cytoplasm. This subunit acts as a catalytic chaperone that increases the ATP-binding affinity of the ATP-hydrolyzing subunit KdpB by the formation of a transient KdpB/KdpC/ATP ternary complex. In Geotalea uraniireducens (strain Rf4) (Geobacter uraniireducens), this protein is Potassium-transporting ATPase KdpC subunit.